We begin with the raw amino-acid sequence, 39 residues long: L-amino-acid oxidase (39 aa).

Belongs to the flavin monoamine oxidase family. FIG1 subfamily. As to quaternary structure, monomer. This is in contrast with most of its orthologs, that are non-covalently linked homodimers. Requires FAD as cofactor. N-glycosylated. In terms of tissue distribution, expressed by the venom gland.

Its subcellular location is the secreted. The catalysed reaction is an L-alpha-amino acid + O2 + H2O = a 2-oxocarboxylate + H2O2 + NH4(+). It carries out the reaction L-leucine + O2 + H2O = 4-methyl-2-oxopentanoate + H2O2 + NH4(+). In terms of biological role, catalyzes an oxidative deamination of predominantly hydrophobic and aromatic L-amino acids, thus producing hydrogen peroxide that may contribute to the diverse toxic effects of this enzyme. Shows activity on L-Leu. Exhibits diverse biological activities, such as hemorrhage, hemolysis, edema, apoptosis of vascular endothelial cells or tumor cell lines, and antiparasitic activities, as well as regulation of platelet aggregation. Effects of snake L-amino oxidases on platelets are controversial, since they either induce aggregation or inhibit agonist-induced aggregation. These different effects are probably due to different experimental conditions. In addition, this protein inhibits dose-dependently the growth of Gram-positive, Gram-negative bacteria and yeast, probably by the generation of hydrogen peroxide. The sequence is that of L-amino-acid oxidase from Bothrops marajoensis (Marajo lancehead).